The primary structure comprises 223 residues: ATP-dependent dethiobiotin synthetase BioD (223 aa).

A Mg(2+)-binding site is contributed by threonine 16. The active site involves lysine 37. Position 41 (serine 41) interacts with substrate. 2 residues coordinate Mg(2+): aspartate 50 and glutamate 111. ATP is bound by residues aspartate 50, 111–114 (EGAG), and 171–172 (NR).

This sequence belongs to the dethiobiotin synthetase family. In terms of assembly, homodimer. Mg(2+) serves as cofactor.

It localises to the cytoplasm. It catalyses the reaction (7R,8S)-7,8-diammoniononanoate + CO2 + ATP = (4R,5S)-dethiobiotin + ADP + phosphate + 3 H(+). Its pathway is cofactor biosynthesis; biotin biosynthesis; biotin from 7,8-diaminononanoate: step 1/2. In terms of biological role, catalyzes a mechanistically unusual reaction, the ATP-dependent insertion of CO2 between the N7 and N8 nitrogen atoms of 7,8-diaminopelargonic acid (DAPA, also called 7,8-diammoniononanoate) to form a ureido ring. In Anaeromyxobacter dehalogenans (strain 2CP-1 / ATCC BAA-258), this protein is ATP-dependent dethiobiotin synthetase BioD.